The chain runs to 503 residues: Aspartyl/glutamyl-tRNA(Asn/Gln) amidotransferase subunit B (503 aa).

Belongs to the GatB/GatE family. GatB subfamily. In terms of assembly, heterotrimer of A, B and C subunits.

It catalyses the reaction L-glutamyl-tRNA(Gln) + L-glutamine + ATP + H2O = L-glutaminyl-tRNA(Gln) + L-glutamate + ADP + phosphate + H(+). The catalysed reaction is L-aspartyl-tRNA(Asn) + L-glutamine + ATP + H2O = L-asparaginyl-tRNA(Asn) + L-glutamate + ADP + phosphate + 2 H(+). Its function is as follows. Allows the formation of correctly charged Asn-tRNA(Asn) or Gln-tRNA(Gln) through the transamidation of misacylated Asp-tRNA(Asn) or Glu-tRNA(Gln) in organisms which lack either or both of asparaginyl-tRNA or glutaminyl-tRNA synthetases. The reaction takes place in the presence of glutamine and ATP through an activated phospho-Asp-tRNA(Asn) or phospho-Glu-tRNA(Gln). The polypeptide is Aspartyl/glutamyl-tRNA(Asn/Gln) amidotransferase subunit B (Ruegeria pomeroyi (strain ATCC 700808 / DSM 15171 / DSS-3) (Silicibacter pomeroyi)).